A 104-amino-acid chain; its full sequence is Large ribosomal subunit protein bL21 (104 aa).

Belongs to the bacterial ribosomal protein bL21 family. Part of the 50S ribosomal subunit. Contacts protein L20.

This protein binds to 23S rRNA in the presence of protein L20. This Rhodopirellula baltica (strain DSM 10527 / NCIMB 13988 / SH1) protein is Large ribosomal subunit protein bL21.